We begin with the raw amino-acid sequence, 544 residues long: Tyrosyl-DNA phosphodiesterase 1 (544 aa).

The active-site Nucleophile is H182. A substrate-binding site is contributed by K184. Residues 312 to 316 are interaction with DNA; it reads SIGTS. H432 (proton donor/acceptor) is an active-site residue. A substrate-binding site is contributed by K434.

Belongs to the tyrosyl-DNA phosphodiesterase family.

Its subcellular location is the nucleus. Its function is as follows. DNA repair enzyme that can remove a variety of covalent adducts from DNA through hydrolysis of a 3'-phosphodiester bond, giving rise to DNA with a free 3' phosphate. Catalyzes the hydrolysis of dead-end complexes between DNA and the topoisomerase I active site tyrosine residue. Hydrolyzes 3'-phosphoglycolates on protruding 3' ends on DNA double-strand breaks due to DNA damage by radiation and free radicals. Also cleaves 5' phosphotyrosyl adducts resulting from dead-end complexes between DNA and the active site tyrosine of topoisomerase II. Contributes to DNA repair after radiation damage. Acts on blunt-ended double-strand DNA breaks and on single-stranded DNA. May have low 3'exonuclease activity and may be able to remove a single nucleoside from the 3'end of DNA and RNA molecules with 3'hydroxyl groups. Has no exonuclease activity towards DNA or RNA with a 3'phosphate. The protein is Tyrosyl-DNA phosphodiesterase 1 (TDP1) of Saccharomyces cerevisiae (strain ATCC 204508 / S288c) (Baker's yeast).